We begin with the raw amino-acid sequence, 215 residues long: Glycerol-3-phosphate acyltransferase (215 aa).

6 helical membrane passes run 3-23 (LILL…LWIG), 42-61 (TNTF…LIDI), 68-90 (TLLP…FAVL), 110-130 (AGVL…VFVL), 134-154 (LFSM…ISVL), and 162-182 (LLPG…AIII).

The protein belongs to the PlsY family. In terms of assembly, probably interacts with PlsX.

The protein localises to the cell membrane. It catalyses the reaction an acyl phosphate + sn-glycerol 3-phosphate = a 1-acyl-sn-glycero-3-phosphate + phosphate. It functions in the pathway lipid metabolism; phospholipid metabolism. Catalyzes the transfer of an acyl group from acyl-phosphate (acyl-PO(4)) to glycerol-3-phosphate (G3P) to form lysophosphatidic acid (LPA). This enzyme utilizes acyl-phosphate as fatty acyl donor, but not acyl-CoA or acyl-ACP. In Streptococcus equi subsp. zooepidemicus (strain MGCS10565), this protein is Glycerol-3-phosphate acyltransferase.